The chain runs to 413 residues: Multifunctional CCA protein (413 aa).

Residues Gly-8 and Arg-11 each coordinate ATP. Residues Gly-8 and Arg-11 each coordinate CTP. Positions 21 and 23 each coordinate Mg(2+). Positions 91, 137, and 140 each coordinate ATP. Arg-91, Arg-137, and Arg-140 together coordinate CTP. Residues 228–329 (TGLHTLMTVT…VKLFDSIDAW (102 aa)) enclose the HD domain.

The protein belongs to the tRNA nucleotidyltransferase/poly(A) polymerase family. Bacterial CCA-adding enzyme type 1 subfamily. In terms of assembly, monomer. Can also form homodimers and oligomers. Mg(2+) is required as a cofactor. Ni(2+) serves as cofactor.

It carries out the reaction a tRNA precursor + 2 CTP + ATP = a tRNA with a 3' CCA end + 3 diphosphate. It catalyses the reaction a tRNA with a 3' CCA end + 2 CTP + ATP = a tRNA with a 3' CCACCA end + 3 diphosphate. Catalyzes the addition and repair of the essential 3'-terminal CCA sequence in tRNAs without using a nucleic acid template. Adds these three nucleotides in the order of C, C, and A to the tRNA nucleotide-73, using CTP and ATP as substrates and producing inorganic pyrophosphate. tRNA 3'-terminal CCA addition is required both for tRNA processing and repair. Also involved in tRNA surveillance by mediating tandem CCA addition to generate a CCACCA at the 3' terminus of unstable tRNAs. While stable tRNAs receive only 3'-terminal CCA, unstable tRNAs are marked with CCACCA and rapidly degraded. This chain is Multifunctional CCA protein, found in Klebsiella pneumoniae (strain 342).